Here is a 190-residue protein sequence, read N- to C-terminus: MLVMSITFSFVAVALLVYFYVKVRTSFSPDAYAKTMQQEVIKMIRDIRYEADIAVQMLEKKIGECNQVVRTIDRKLTLLNEEILKEHTARTLFRASGAGQETREEVCARPEHRSAPSRAGSSAAKPTPTKRGTIEVYNEKIIRDNGLRAESPLLKDAIIALSEKGLAPEFIAEKTGKPLGEVQLLINLSR.

The chain crosses the membrane as a helical span at residues 1–21 (MLVMSITFSFVAVALLVYFYV). A compositionally biased stretch (basic and acidic residues) spans 103 to 114 (REEVCARPEHRS). The segment at 103-130 (REEVCARPEHRSAPSRAGSSAAKPTPTK) is disordered.

The protein to B.burgdorferi BB0265.

The protein localises to the membrane. This is an uncharacterized protein from Treponema pallidum (strain Nichols).